The chain runs to 394 residues: Candidapepsin (394 aa).

The N-terminal stretch at 1-23 is a signal peptide; that stretch reads MATIFLFTKNVFIALAFALFAQG. A propeptide spans 24 to 60 (activation peptide); sequence LTIPDGIEKRTDKVVSLDFTVIRKPFNATAHRLIQKR. N-linked (GlcNAc...) asparagine glycosylation occurs at Asn50. One can recognise a Peptidase A1 domain in the interval 74–381; the sequence is YAADIVVGSN…DLDDKTISLA (308 aa). Residue Asp92 is part of the active site. The cysteines at positions 107 and 119 are disulfide-linked. Asp278 is a catalytic residue. A disulfide bond links Cys314 and Cys347.

It belongs to the peptidase A1 family. Post-translationally, O-glycosylated.

It is found in the secreted. It carries out the reaction Preferential cleavage at the carboxyl of hydrophobic amino acids, but fails to cleave 15-Leu-|-Tyr-16, 16-Tyr-|-Leu-17 and 24-Phe-|-Phe-25 of insulin B chain. Activates trypsinogen, and degrades keratin.. This Candida tropicalis (Yeast) protein is Candidapepsin (SAPT1).